Here is a 465-residue protein sequence, read N- to C-terminus: Cysteine--tRNA ligase (465 aa).

Cys-27 contacts Zn(2+). A 'HIGH' region motif is present at residues 29–39; that stretch reads PTVYDDAHLGH. Residues Cys-207, His-237, and Glu-241 each contribute to the Zn(2+) site. Positions 269–273 match the 'KMSKS' region motif; it reads KMSKS. Lys-272 provides a ligand contact to ATP.

It belongs to the class-I aminoacyl-tRNA synthetase family. Monomer. Zn(2+) is required as a cofactor.

It localises to the cytoplasm. It carries out the reaction tRNA(Cys) + L-cysteine + ATP = L-cysteinyl-tRNA(Cys) + AMP + diphosphate. In Helicobacter pylori (strain HPAG1), this protein is Cysteine--tRNA ligase.